An 890-amino-acid chain; its full sequence is Possible lysine-specific histone demethylase 1 (890 aa).

Over residues 1–13 (MKPTQFGGSSSKM) the composition is skewed to polar residues. Residues 1 to 164 (MKPTQFGGSS…TVLSGQEGAV (164 aa)) form a disordered region. Phosphoserine occurs at positions 24 and 27. The segment covering 84-109 (NRPSGSGDTASNDKSGSASMGPNNQQ) has biased composition (polar residues). Residues 110 to 122 (AERRSQSQTRKSE) show a composition bias toward basic and acidic residues. Residues 123–138 (ANATSSSVSGPSAGNS) show a composition bias toward low complexity. In terms of domain architecture, SWIRM spans 160-259 (QEGAVFQSRL…FGIFKRLKPI (100 aa)). 267 to 295 (VIVIGAGISGLAVAHQLQQFGMDVIVLEA) is a binding site for FAD. A disordered region spans residues 860–890 (DLSPNLSDSSPSSKKSEENSNSNTADSTELQ). The segment covering 861–882 (LSPNLSDSSPSSKKSEENSNSN) has biased composition (low complexity). Phosphoserine is present on S866.

It belongs to the flavin monoamine oxidase family. As to quaternary structure, component of a complex that contains at least HDAC1/Rpd3, CoRest and Su(var)3-3/Hdm. FAD serves as cofactor.

Its subcellular location is the nucleus. The protein resides in the chromosome. Probable histone demethylase that specifically demethylates 'Lys-4' of histone H3, a specific tag for epigenetic transcriptional activation, thereby acting as a corepressor. Required for heterochromatic gene silencing. Acts by oxidizing the substrate by FAD to generate the corresponding imine that is subsequently hydrolyzed. Demethylates both mono- and tri-methylated 'Lys-4' of histone H3. May also demethylate 'Lys-9' of histone H3, Plays a role in the repression of neuronal genes. This is Possible lysine-specific histone demethylase 1 (Su(var)3-3) from Drosophila melanogaster (Fruit fly).